A 449-amino-acid polypeptide reads, in one-letter code: Plasmepsin IV (449 aa).

Over 1-37 the chain is Cytoplasmic; the sequence is MALTVKEEEFSNTLIKNASAFDRLKLGNLKNLKIQKK. A propeptide spanning residues 1–121 is cleaved from the precursor; the sequence is MALTVKEEEF…SGYAQKGYLG (121 aa). The chain crosses the membrane as a helical; Signal-anchor for type II membrane protein span at residues 38–58; sequence LQFLYLILFVLITGVFFFFLI. Residues 59-449 are Lumenal-facing; that stretch reads GNFYSHRKLY…SVGFAVAKNL (391 aa). The Peptidase A1 domain occupies 137–444; it reads FYGEGQIGTN…DYEKESVGFA (308 aa). Residue Asp155 is part of the active site. A disulfide bridge links Cys168 with Cys173. The active site involves Asp335. A disulfide bridge links Cys370 with Cys406.

The protein belongs to the peptidase A1 family. As to quaternary structure, component of the hemozoin formation complex (HFC) composed of falcipains FP2A and/or FP2B, plasmepsins PMII, PMIII/HAP and PMIV, heme detoxifying protein HDP and falcilysin FLN. The HFC complex is involved in hemoglobin degradation and detoxification of heme in the food vacuole during the asexual blood stage. Proteolytically cleaved into the soluble active mature form by cysteine proteases in the digestive vacuole of trophozoites. Proteolysis requires an acidic environment. Autoprocessing or transprocessing by other plasmepsins such as PMII may serve as an alternate activation system.

The protein resides in the membrane. It is found in the vacuole lumen. It carries out the reaction Hydrolysis of the bonds linking certain hydrophobic residues in hemoglobin or globin. Also cleaves small molecules substrates such as Ala-Leu-Glu-Arg-Thr-Phe-|-Phe(NO2)-Ser-Phe-Pro-Thr.. Inhibited by KNI derived compounds KNI-10333 and to a lesser extent KNI-10743. Functionally, during the asexual blood stage, catalyzes the cleavage of denatured host hemoglobin (Hb). Digestion of host Hb is an essential step which provides the parasite with amino acids for protein synthesis, and regulates osmolarity. The protein is Plasmepsin IV of Plasmodium falciparum (isolate 3D7).